Here is a 152-residue protein sequence, read N- to C-terminus: Deoxyuridine 5'-triphosphate nucleotidohydrolase (152 aa).

Residues 71–73, Asn-84, 88–90, and Met-98 contribute to the substrate site; these read RSG and LID.

This sequence belongs to the dUTPase family. Mg(2+) is required as a cofactor.

The catalysed reaction is dUTP + H2O = dUMP + diphosphate + H(+). The protein operates within pyrimidine metabolism; dUMP biosynthesis; dUMP from dCTP (dUTP route): step 2/2. This enzyme is involved in nucleotide metabolism: it produces dUMP, the immediate precursor of thymidine nucleotides and it decreases the intracellular concentration of dUTP so that uracil cannot be incorporated into DNA. The protein is Deoxyuridine 5'-triphosphate nucleotidohydrolase of Shewanella sp. (strain ANA-3).